A 122-amino-acid polypeptide reads, in one-letter code: NADPH-dependent 7-cyano-7-deazaguanine reductase (122 aa).

Catalysis depends on Cys-34, which acts as the Thioimide intermediate. Asp-41 acts as the Proton donor in catalysis. Substrate contacts are provided by residues 56-58 and 75-76; these read VEL and HE.

This sequence belongs to the GTP cyclohydrolase I family. QueF type 1 subfamily.

Its subcellular location is the cytoplasm. It carries out the reaction 7-aminomethyl-7-carbaguanine + 2 NADP(+) = 7-cyano-7-deazaguanine + 2 NADPH + 3 H(+). It participates in tRNA modification; tRNA-queuosine biosynthesis. Its function is as follows. Catalyzes the NADPH-dependent reduction of 7-cyano-7-deazaguanine (preQ0) to 7-aminomethyl-7-deazaguanine (preQ1). This is NADPH-dependent 7-cyano-7-deazaguanine reductase from Anaeromyxobacter sp. (strain Fw109-5).